A 646-amino-acid polypeptide reads, in one-letter code: MSFLSRQQPPPPRRAGAACTLRQKLIFSPCSDCEEEEEEEEEEGSGHSTGEDSAFQEPDSPLPPARSPTEPGPERRRSPGPAPGSPGELEEDLLLPGACPGADEAGGGAEGDSWEEEGFGSSSPVKSPAAPYFLGSSFSPVRCGGPGDASPRGCGARRAGEGRRSPRPDHPGTPPHKTFRKLRLFDTPHTPKSLLSKARGIDSSSVKLRGSSLFMDTEKSGKREFDVRQTPQVNINPFTPDSLLLHSSGQCRRRKRTYWNDSCGEDMEASDYELEDETRPAKRITITESNMKSRYTTEFHELEKIGSGEFGSVFKCVKRLDGCIYAIKRSKKPLAGSVDEQNALREVYAHAVLGQHSHVVRYFSAWAEDDHMLIQNEYCNGGSLADAISENYRIMSYFKEAELKDLLLQVGRGLRYIHSMSLVHMDIKPSNIFISRTSIPNAASEEGDEDDWASNKVMFKIGDLGHVTRISSPQVEEGDSRFLANEVLQENYTHLPKADIFALALTVVCAAGAEPLPRNGDQWHEIRQGRLPRIPQVLSQEFTELLKVMIHPDPERRPSAMALVKHSVLLSASRKSAEQLRIELNAEKFKNSLLQKELKKAQMAKAAAEERALFTDRMATRSTTQSNRTSRLIGKKMNRSVSLTIY.

The interval 1–181 (MSFLSRQQPP…GTPPHKTFRK (181 aa)) is disordered. The span at 32–43 (DCEEEEEEEEEE) shows a compositional bias: acidic residues. A Phosphoserine; by PLK1 modification is found at Ser-53. Residues Ser-78 and Ser-85 each carry the phosphoserine modification. Positions 94-103 (LLPGACPGAD) are enriched in low complexity. Ser-123 is modified (phosphoserine; by CDK1). A phosphoserine mark is found at Ser-127, Ser-137, Ser-139, Ser-150, and Ser-165. Positions 158-170 (RAGEGRRSPRPDH) are enriched in basic and acidic residues. Thr-187, Thr-190, and Thr-239 each carry phosphothreonine. A phosphoserine mark is found at Ser-270, Ser-307, and Ser-312. A Protein kinase domain is found at 299-569 (FHELEKIGSG…AMALVKHSVL (271 aa)). Residues 305 to 313 (IGSGEFGSV) and Lys-328 each bind ATP. Asn-342 is a binding site for Mg(2+). Residue Asp-426 is the Proton acceptor of the active site. Positions 431, 463, and 465 each coordinate Mg(2+). Residue Ser-642 is modified to Phosphoserine; by BRSK1 and BRSK2.

It belongs to the protein kinase superfamily. Ser/Thr protein kinase family. WEE1 subfamily. It depends on Mg(2+) as a cofactor. Phosphorylated during M and G1 phases. Also autophosphorylated. Phosphorylation at Ser-642 by BRSK1 and BRSK2 in post-mitotic neurons, leads to down-regulate WEE1 activity in polarized neurons. Phosphorylated at Ser-53 and Ser-123 by PLK1 and CDK1, respectively, generating an signal for degradation that can be recognized by the SCF(BTRC) complex, leading to its ubiquitination and degradation at the onset of G2/M phase. Post-translationally, dephosphorylated at Thr-239 by CTDP1. Dephosphorylated at Ser-53 and Ser-123 by the serine/threonine-protein phosphatase 2A preventing its ubiquitin-mediated degradation. In terms of processing, ubiquitinated and degraded at the onset of G2/M phase.

The protein localises to the nucleus. The catalysed reaction is L-tyrosyl-[protein] + ATP = O-phospho-L-tyrosyl-[protein] + ADP + H(+). With respect to regulation, synthesis is increased during S and G2 phases, presumably by an increase in transcription; activity is decreased by phosphorylation during M phase. Protein levels fall in M phase as a result of decreased synthesis combined with degradation. Activity seems to be negatively regulated by phosphorylation upon entry into mitosis, although N-terminal phosphorylation might also regulate the protein stability via protection from proteolysis or might regulate the subcellular location. In terms of biological role, acts as a negative regulator of entry into mitosis (G2 to M transition) by protecting the nucleus from cytoplasmically activated cyclin B1-complexed CDK1 before the onset of mitosis by mediating phosphorylation of CDK1 on 'Tyr-15'. Specifically phosphorylates and inactivates cyclin B1-complexed CDK1 reaching a maximum during G2 phase and a minimum as cells enter M phase. Phosphorylation of cyclin B1-CDK1 occurs exclusively on 'Tyr-15' and phosphorylation of monomeric CDK1 does not occur. Its activity increases during S and G2 phases and decreases at M phase when it is hyperphosphorylated. A correlated decrease in protein level occurs at M/G1 phase, probably due to its degradation. The protein is Wee1-like protein kinase of Homo sapiens (Human).